Consider the following 488-residue polypeptide: Cardiolipin synthase 2 (488 aa).

A run of 2 helical transmembrane segments spans residues 8 to 28 and 39 to 59; these read IIINILLVSAFLLNLVFAFII and IWAWLLVLVFLPLVGFILYLL. PLD phosphodiesterase domains are found at residues 223-250 and 401-428; these read MNNRNHRKIVVIDGTIGYVGGFNVGDEY and DNGFLHSKTLVIDDEVASVGTANMDNRS. Active-site residues include His228, Lys230, Asp235, His406, Lys408, and Asp413.

This sequence belongs to the phospholipase D family. Cardiolipin synthase subfamily.

Its subcellular location is the cell membrane. The enzyme catalyses 2 a 1,2-diacyl-sn-glycero-3-phospho-(1'-sn-glycerol) = a cardiolipin + glycerol. Functionally, catalyzes the reversible phosphatidyl group transfer from one phosphatidylglycerol molecule to another to form cardiolipin (CL) (diphosphatidylglycerol) and glycerol. The protein is Cardiolipin synthase 2 (cls2) of Staphylococcus epidermidis (strain ATCC 35984 / DSM 28319 / BCRC 17069 / CCUG 31568 / BM 3577 / RP62A).